The chain runs to 268 residues: Zinc finger protein SNAI2 (268 aa).

Positions 1-20 (MPRSFLVKKHFNASKKPNYS) are SNAG domain. The interval 80-117 (SSSLGRVSPPPPSDTSSKDHSGSESPISDEEERLQSKL) is disordered. 4 consecutive C2H2-type zinc fingers follow at residues 128–150 (FQCNLCNKTYSTFSGLAKHKQLH), 159–181 (FSCKYCDKEYVSLGALKMHIRTH), 185–207 (CVCKICGKAFSRPWLLQGHIRTH), and 213–235 (FSCPHCNRAFADRSNLRAHLQTH). The C2H2-type 5; atypical zinc finger occupies 241–264 (YQCKNCSKTFSRMSLLHKHEESGC).

This sequence belongs to the snail C2H2-type zinc-finger protein family. Interacts (via SNAG domain) with LIMD1 (via LIM domains), WTIP (via LIM domains) and AJUBA (via LIM domains). Interacts (via zinc fingers) with KPNA2, KPNB1, and TNPO1. May interact (via zinc fingers) with IPO7. Phosphorylated by GSK3B. Once phosphorylated, it becomes a target for ubiquitination. Post-translationally, ubiquitinated by the SCF(FBXO11) complex; ubiquitination requires previous GSK3B-mediated SNAI2 phosphorylation. As to expression, expressed in most adult human tissues, including spleen, thymus, prostate, testis, ovary, small intestine, colon, heart, brain, placenta, lung, liver, skeletal muscle, kidney and pancreas. Not detected in peripheral blood leukocyte. Expressed in the dermis and in all layers of the epidermis, with high levels of expression in the basal layers (at protein level). Expressed in osteoblasts (at protein level). Expressed in mesenchymal stem cells (at protein level). Expressed in breast tumor cells (at protein level).

It localises to the nucleus. Its subcellular location is the cytoplasm. Transcriptional repressor that modulates both activator-dependent and basal transcription. Involved in the generation and migration of neural crest cells. Plays a role in mediating RAF1-induced transcriptional repression of the TJ protein, occludin (OCLN) and subsequent oncogenic transformation of epithelial cells. Represses BRCA2 expression by binding to its E2-box-containing silencer and recruiting CTBP1 and HDAC1 in breast cells. In epidermal keratinocytes, binds to the E-box in ITGA3 promoter and represses its transcription. Involved in the regulation of ITGB1 and ITGB4 expression and cell adhesion and proliferation in epidermal keratinocytes. Binds to E-box2 domain of BSG and activates its expression during TGFB1-induced epithelial-mesenchymal transition (EMT) in hepatocytes. Represses E-Cadherin/CDH1 transcription via E-box elements. Involved in osteoblast maturation. Binds to RUNX2 and SOC9 promoters and may act as a positive and negative transcription regulator, respectively, in osteoblasts. Binds to CXCL12 promoter via E-box regions in mesenchymal stem cells and osteoblasts. Plays an essential role in TWIST1-induced EMT and its ability to promote invasion and metastasis. The protein is Zinc finger protein SNAI2 (SNAI2) of Homo sapiens (Human).